The primary structure comprises 114 residues: Large ribosomal subunit protein uL18 (114 aa).

It belongs to the universal ribosomal protein uL18 family. Part of the 50S ribosomal subunit; part of the 5S rRNA/L5/L18/L25 subcomplex. Contacts the 5S and 23S rRNAs.

This is one of the proteins that bind and probably mediate the attachment of the 5S RNA into the large ribosomal subunit, where it forms part of the central protuberance. The protein is Large ribosomal subunit protein uL18 of Azobacteroides pseudotrichonymphae genomovar. CFP2.